Reading from the N-terminus, the 344-residue chain is Holliday junction branch migration complex subunit RuvB (344 aa).

Residues methionine 1–tyrosine 185 form a large ATPase domain (RuvB-L) region. Residues leucine 24, arginine 25, glycine 66, lysine 69, threonine 70, threonine 71, glutamate 132–tyrosine 134, arginine 175, tyrosine 185, and arginine 222 each bind ATP. Threonine 70 is a binding site for Mg(2+). Residues threonine 186–aspartate 256 form a small ATPAse domain (RuvB-S) region. Residues glutamate 259–glutamate 344 are head domain (RuvB-H). Residues arginine 314 and arginine 319 each contribute to the DNA site.

The protein belongs to the RuvB family. As to quaternary structure, homohexamer. Forms an RuvA(8)-RuvB(12)-Holliday junction (HJ) complex. HJ DNA is sandwiched between 2 RuvA tetramers; dsDNA enters through RuvA and exits via RuvB. An RuvB hexamer assembles on each DNA strand where it exits the tetramer. Each RuvB hexamer is contacted by two RuvA subunits (via domain III) on 2 adjacent RuvB subunits; this complex drives branch migration. In the full resolvosome a probable DNA-RuvA(4)-RuvB(12)-RuvC(2) complex forms which resolves the HJ.

It is found in the cytoplasm. It carries out the reaction ATP + H2O = ADP + phosphate + H(+). Functionally, the RuvA-RuvB-RuvC complex processes Holliday junction (HJ) DNA during genetic recombination and DNA repair, while the RuvA-RuvB complex plays an important role in the rescue of blocked DNA replication forks via replication fork reversal (RFR). RuvA specifically binds to HJ cruciform DNA, conferring on it an open structure. The RuvB hexamer acts as an ATP-dependent pump, pulling dsDNA into and through the RuvAB complex. RuvB forms 2 homohexamers on either side of HJ DNA bound by 1 or 2 RuvA tetramers; 4 subunits per hexamer contact DNA at a time. Coordinated motions by a converter formed by DNA-disengaged RuvB subunits stimulates ATP hydrolysis and nucleotide exchange. Immobilization of the converter enables RuvB to convert the ATP-contained energy into a lever motion, pulling 2 nucleotides of DNA out of the RuvA tetramer per ATP hydrolyzed, thus driving DNA branch migration. The RuvB motors rotate together with the DNA substrate, which together with the progressing nucleotide cycle form the mechanistic basis for DNA recombination by continuous HJ branch migration. Branch migration allows RuvC to scan DNA until it finds its consensus sequence, where it cleaves and resolves cruciform DNA. The polypeptide is Holliday junction branch migration complex subunit RuvB (Salinibacter ruber (strain DSM 13855 / M31)).